Reading from the N-terminus, the 305-residue chain is Acetaldehyde dehydrogenase (305 aa).

An NAD(+)-binding site is contributed by Ser13–Ile16. Cys128 functions as the Acyl-thioester intermediate in the catalytic mechanism. Residues Ser159 to Asn167 and Asn278 each bind NAD(+).

It belongs to the acetaldehyde dehydrogenase family.

It carries out the reaction acetaldehyde + NAD(+) + CoA = acetyl-CoA + NADH + H(+). This chain is Acetaldehyde dehydrogenase, found in Roseiflexus sp. (strain RS-1).